A 185-amino-acid polypeptide reads, in one-letter code: Ribosome-recycling factor (185 aa).

The protein belongs to the RRF family.

The protein resides in the cytoplasm. Responsible for the release of ribosomes from messenger RNA at the termination of protein biosynthesis. May increase the efficiency of translation by recycling ribosomes from one round of translation to another. The protein is Ribosome-recycling factor of Clostridium acetobutylicum (strain ATCC 824 / DSM 792 / JCM 1419 / IAM 19013 / LMG 5710 / NBRC 13948 / NRRL B-527 / VKM B-1787 / 2291 / W).